The following is a 250-amino-acid chain: UPF0014 membrane protein YjkA (250 aa).

Helical transmembrane passes span 3 to 23, 32 to 52, 57 to 77, 91 to 111, 117 to 137, and 214 to 234; these read YLSL…SKSF, IIAT…LSLI, HPVF…QNVI, FAAL…LHII, YVIP…SLFL, and LLIV…LSVL.

The protein belongs to the UPF0014 family.

It localises to the cell membrane. This is UPF0014 membrane protein YjkA (yjkA) from Bacillus subtilis (strain 168).